Reading from the N-terminus, the 91-residue chain is DNA-binding protein HU (91 aa).

Belongs to the bacterial histone-like protein family.

Functionally, histone-like DNA-binding protein which is capable of wrapping DNA to stabilize it, and thus to prevent its denaturation under extreme environmental conditions. Also seems to act as a fortuitous virulence factor in delayed sequelae by binding to heparan sulfate-proteoglycans in the extracellular matrix of target organs and acting as a nidus for in situ immune complex formation. This chain is DNA-binding protein HU (hup), found in Streptococcus mutans serotype c (strain ATCC 700610 / UA159).